The chain runs to 69 residues: Chondroitin proteoglycan 9 (69 aa).

The first 19 residues, 1–19, serve as a signal peptide directing secretion; the sequence is MHLWQLVLLVILFFGAAFG. O-linked (Xyl...) (chondroitin sulfate) serine glycans are attached at residues Ser-25 and Ser-27.

The protein is Chondroitin proteoglycan 9 of Caenorhabditis elegans.